Consider the following 242-residue polypeptide: Glucosamine-6-phosphate deaminase (242 aa).

D67 acts as the Proton acceptor; for enolization step in catalysis. The For ring-opening step role is filled by N136. H138 acts as the Proton acceptor; for ring-opening step in catalysis. E143 serves as the catalytic For ring-opening step.

This sequence belongs to the glucosamine/galactosamine-6-phosphate isomerase family. NagB subfamily.

It catalyses the reaction alpha-D-glucosamine 6-phosphate + H2O = beta-D-fructose 6-phosphate + NH4(+). It participates in amino-sugar metabolism; N-acetylneuraminate degradation; D-fructose 6-phosphate from N-acetylneuraminate: step 5/5. In terms of biological role, catalyzes the reversible isomerization-deamination of glucosamine 6-phosphate (GlcN6P) to form fructose 6-phosphate (Fru6P) and ammonium ion. The polypeptide is Glucosamine-6-phosphate deaminase (Clostridium perfringens (strain ATCC 13124 / DSM 756 / JCM 1290 / NCIMB 6125 / NCTC 8237 / Type A)).